The following is a 540-amino-acid chain: Chaperonin GroEL (540 aa).

ATP is bound by residues 29 to 32, 86 to 90, glycine 413, 476 to 478, and aspartate 492; these read TIGP, DGTTT, and NAA.

The protein belongs to the chaperonin (HSP60) family. In terms of assembly, forms a cylinder of 14 subunits composed of two heptameric rings stacked back-to-back. Interacts with the co-chaperonin GroES.

Its subcellular location is the cytoplasm. The catalysed reaction is ATP + H2O + a folded polypeptide = ADP + phosphate + an unfolded polypeptide.. Functionally, together with its co-chaperonin GroES, plays an essential role in assisting protein folding. The GroEL-GroES system forms a nano-cage that allows encapsulation of the non-native substrate proteins and provides a physical environment optimized to promote and accelerate protein folding. The sequence is that of Chaperonin GroEL from Staphylococcus carnosus (strain TM300).